An 843-amino-acid polypeptide reads, in one-letter code: DNA helicase MCM8 (843 aa).

Gly residues predominate over residues 1–23; that stretch reads MSQGWRGGWSGGRGGNPYAGGWR. Residues 1–52 form a disordered region; sequence MSQGWRGGWSGGRGGNPYAGGWRGRPWRGRGQGGSWSRNSGRDPVCFSTAPP. Positions 394–601 constitute an MCM domain; that stretch reads LFQLIVNSLC…DHDHLLSEHV (208 aa). Position 446 to 453 (446 to 453) interacts with ATP; that stretch reads GDPGLGKS.

The protein belongs to the MCM family. Component of the MCM8-MCM9 complex, which forms a hexamer composed of mcm8 and mcm9.

It localises to the nucleus. It catalyses the reaction ATP + H2O = ADP + phosphate + H(+). Component of the MCM8-MCM9 complex, a complex involved in homologous recombination repair following DNA interstrand cross-links and plays a key role during gametogenesis. The MCM8-MCM9 complex probably acts as a hexameric helicase required to process aberrant forks into homologous recombination substrates and to orchestrate homologous recombination with resection, fork stabilization and fork restart. In eggs, required for elongation during DNA replication by facilitating the recruitment of rpa2/rpa34 and stimulating the processivity of DNA polymerases at replication foci. Probably not required for DNA replication in other cells. This Xenopus tropicalis (Western clawed frog) protein is DNA helicase MCM8 (mcm8).